The chain runs to 442 residues: MDDDDFGGFEAAETFDGEQGGNQAVSPAVPWATFPAVSGVRLSPASPELILDHDHSSPSTGHLPPDAVISSADDTHADSSLMSQTISKAQIQQSAHTHLNIPLFPLGLTDEPSHGALALEDEPEGPGVHVSNSQLRQKISSLETKLKASEEEKQRIKKDVESLMEKHSVLEKGFLKEKEQDAVSFQARYRELQEKHKQELEDMRKAGHEALSIIVDEYKALLQSSVKQQLDAIEKQYVSAIEKQAHRCEELLHAQHQRLLDVLDTEKELLREKIQEALTQQSQEQKESLEKCLQEEMQRNKETLESAVKLEKEAMKDVITKAVGEERENLEKVHAEERELWKTEHARDQERVAEAIQAAVQEQQRMSQEAVKAAIVEEQRRSEKAMEEAVKRTRDELVEYVREQRRLDQVTRQRSLSSLELFLSCAQKQLSALIATEPVDIE.

The segment at 1-16 is GGA1-binding motif; the sequence is MDDDDFGGFEAAETFD. Residues 1–27 are disordered; the sequence is MDDDDFGGFEAAETFDGEQGGNQAVSP. 2 positions are modified to phosphoserine: Ser-43 and Ser-46. 2 disordered regions span residues 48 to 80 and 114 to 134; these read ELIL…ADSS and HGAL…SNSQ. Coiled coils occupy residues 130 to 210, 253 to 318, and 346 to 408; these read VSNS…GHEA, HAQH…MKDV, and ARDQ…RRLD. Residues 211-414 are homodimerization; sequence LSIIVDEYKA…RRLDQVTRQR (204 aa).

Homodimer. Interacts with GGA1, GGA2 and AP1G1.

The protein resides in the membrane. It is found in the golgi apparatus. The protein localises to the trans-Golgi network membrane. Its subcellular location is the trans-Golgi network. In terms of biological role, involved in the regulation of membrane traffic through the trans-Golgi network (TGN). Functions in close cooperation with the GGAs in the sorting of hydrolases to lysosomes. The sequence is that of Coiled-coil domain-containing protein 91 (Ccdc91) from Mus musculus (Mouse).